A 197-amino-acid polypeptide reads, in one-letter code: 3-isopropylmalate dehydratase small subunit (197 aa).

The protein belongs to the LeuD family. LeuD type 1 subfamily. In terms of assembly, heterodimer of LeuC and LeuD.

The catalysed reaction is (2R,3S)-3-isopropylmalate = (2S)-2-isopropylmalate. Its pathway is amino-acid biosynthesis; L-leucine biosynthesis; L-leucine from 3-methyl-2-oxobutanoate: step 2/4. In terms of biological role, catalyzes the isomerization between 2-isopropylmalate and 3-isopropylmalate, via the formation of 2-isopropylmaleate. The sequence is that of 3-isopropylmalate dehydratase small subunit from Geobacillus sp. (strain WCH70).